The chain runs to 56 residues: Large ribosomal subunit protein bL32 (56 aa).

Basic residues predominate over residues 1 to 16 (MAVQKNRKTRSKRGMR). Residues 1 to 28 (MAVQKNRKTRSKRGMRRSHDALTTAALS) form a disordered region.

Belongs to the bacterial ribosomal protein bL32 family.

This is Large ribosomal subunit protein bL32 from Vibrio campbellii (strain ATCC BAA-1116).